The primary structure comprises 60 residues: Acrosin (60 aa).

N-linked (GlcNAc...) asparagine glycosylation is present at Asn-3. Residues 24–60 form the Peptidase S1 domain; it reads IIGGQDAAHGSWPWMVSLQIFTYHNNRRYHVCGGSLL.

The protein belongs to the peptidase S1 family. Heavy chain (catalytic) and a light chain linked by two disulfide bonds. Forms a heterodimer with SERPINA5.

It catalyses the reaction Preferential cleavage: Arg-|-Xaa, Lys-|-Xaa.. Its activity is regulated as follows. Inhibited by SERPINA5. Its function is as follows. Acrosin is the major protease of mammalian spermatozoa. It is a serine protease of trypsin-like cleavage specificity, it is synthesized in a zymogen form, proacrosin and stored in the acrosome. The polypeptide is Acrosin (ACR) (Capra hircus (Goat)).